Reading from the N-terminus, the 66-residue chain is Photosystem II reaction center protein H (66 aa).

A helical transmembrane segment spans residues 29 to 49; sequence PIMGLTMVLFLVFLLIILQIY.

It belongs to the PsbH family. As to quaternary structure, PSII is composed of 1 copy each of membrane proteins PsbA, PsbB, PsbC, PsbD, PsbE, PsbF, PsbH, PsbI, PsbJ, PsbK, PsbL, PsbM, PsbT, PsbX, PsbY, PsbZ, Psb30/Ycf12, at least 3 peripheral proteins of the oxygen-evolving complex and a large number of cofactors. It forms dimeric complexes.

The protein resides in the plastid. It is found in the chloroplast thylakoid membrane. In terms of biological role, one of the components of the core complex of photosystem II (PSII), required for its stability and/or assembly. PSII is a light-driven water:plastoquinone oxidoreductase that uses light energy to abstract electrons from H(2)O, generating O(2) and a proton gradient subsequently used for ATP formation. It consists of a core antenna complex that captures photons, and an electron transfer chain that converts photonic excitation into a charge separation. The chain is Photosystem II reaction center protein H from Thalassiosira pseudonana (Marine diatom).